A 713-amino-acid chain; its full sequence is Glycine--tRNA ligase beta subunit (713 aa).

This sequence belongs to the class-II aminoacyl-tRNA synthetase family. Tetramer of two alpha and two beta subunits.

It localises to the cytoplasm. It carries out the reaction tRNA(Gly) + glycine + ATP = glycyl-tRNA(Gly) + AMP + diphosphate. This Leptothrix cholodnii (strain ATCC 51168 / LMG 8142 / SP-6) (Leptothrix discophora (strain SP-6)) protein is Glycine--tRNA ligase beta subunit.